The following is a 609-amino-acid chain: Albumin (609 aa).

The signal sequence occupies residues 1–18 (MKWVTFISLLFLFSSAYS). The propeptide occupies 19–24 (RGVFRR). 3 Albumin domains span residues 19–210 (RGVF…DELR), 211–403 (DEGK…EFKP), and 404–601 (LVEE…KLVA). Position 27 (His-27) interacts with Cu cation. Ser-29 is subject to Phosphoserine. Ca(2+) is bound by residues Glu-30 and Asp-37. Cys-77 and Cys-86 form a disulfide bridge. A phosphoserine mark is found at Ser-82 and Ser-89. A Zn(2+)-binding site is contributed by His-91. 6 disulfide bridges follow: Cys-99–Cys-115, Cys-114–Cys-125, Cys-148–Cys-193, Cys-192–Cys-201, Cys-224–Cys-270, and Cys-269–Cys-277. Thr-107 carries the phosphothreonine modification. Position 229 is an N6-succinyllysine (Lys-229). (4Z,15Z)-bilirubin IXalpha is bound at residue Lys-264. Position 268 (Glu-268) interacts with Ca(2+). Zn(2+) is bound by residues His-271 and Asp-273. 4 residues coordinate Ca(2+): Asp-273, Glu-276, Asp-279, and Asp-283. Intrachain disulfides connect Cys-289/Cys-303, Cys-302/Cys-313, Cys-340/Cys-385, Cys-384/Cys-393, Cys-416/Cys-462, Cys-461/Cys-472, Cys-485/Cys-501, and Cys-500/Cys-511. Ser-297 is modified (phosphoserine). Ser-443 bears the Phosphoserine mark. Thr-444 and Thr-446 each carry phosphothreonine. At Lys-460 the chain carries N6-succinyllysine. A Phosphoserine modification is found at Ser-513. 2 disulfides stabilise this stretch: Cys-538/Cys-583 and Cys-582/Cys-591. At Lys-543 the chain carries N6-succinyllysine. N6-methyllysine is present on Lys-558. Phosphothreonine is present on Thr-570. Lys-588 is subject to N6-succinyllysine.

It belongs to the ALB/AFP/VDB family. Interacts with FCGRT; this interaction regulates ALB homeostasis. Interacts with TASOR. In plasma, occurs in a covalently-linked complex with chromophore-bound alpha-1-microglobulin; this interaction does not prevent fatty acid binding to ALB. Phosphorylated by FAM20C in the extracellular medium. Plasma.

The protein localises to the secreted. Binds water, Ca(2+), Na(+), K(+), fatty acids, hormones, bilirubin and drugs. Its main function is the regulation of the colloidal osmotic pressure of blood. Major zinc transporter in plasma, typically binds about 80% of all plasma zinc. Major calcium and magnesium transporter in plasma, binds approximately 45% of circulating calcium and magnesium in plasma. Potentially has more than two calcium-binding sites and might additionally bind calcium in a non-specific manner. The shared binding site between zinc and calcium at residue Asp-273 suggests a crosstalk between zinc and calcium transport in the blood. The rank order of affinity is zinc &gt; calcium &gt; magnesium. Binds to the bacterial siderophore enterobactin and inhibits enterobactin-mediated iron uptake of E.coli from ferric transferrin, and may thereby limit the utilization of iron and growth of enteric bacteria such as E.coli. Does not prevent iron uptake by the bacterial siderophore aerobactin. This is Albumin (ALB) from Pongo abelii (Sumatran orangutan).